The sequence spans 595 residues: P2X purinoceptor 7 (595 aa).

Residues 1–22 (MPACCSCSDVFQYETNKVTRIQ) lie on the Cytoplasmic side of the membrane. Residue Cys-4 is the site of S-palmitoyl cysteine attachment. The chain crosses the membrane as a helical span at residues 23–46 (SMNYGTIKWFFHVIIFSYVCFALV). At 47–328 (SDKLYQRKEP…ILVFGTGGKF (282 aa)) the chain is on the extracellular side. 3 disulfide bridges follow: Cys-119/Cys-168, Cys-129/Cys-152, and Cys-135/Cys-162. Arg-125 and Arg-133 each carry ADP-ribosylarginine. N-linked (GlcNAc...) asparagine glycosylation occurs at Asn-187. An ATP-binding site is contributed by Thr-189. N-linked (GlcNAc...) asparagine glycans are attached at residues Asn-202 and Asn-213. Cysteines 216 and 226 form a disulfide. Asn-241 carries N-linked (GlcNAc...) asparagine glycosylation. An intrachain disulfide couples Cys-260 to Cys-269. Asn-284 is a glycosylation site (N-linked (GlcNAc...) asparagine). ATP contacts are provided by Arg-294 and Lys-311. A helical transmembrane segment spans residues 329–353 (DIIQLVVYIGSTLSYFGLAAVFIDF). Ser-342 provides a ligand contact to Na(+). Tyr-343 is subject to Phosphotyrosine. Over 354-595 (LIDTYSSNCC…GQYSGFKSPY (242 aa)) the chain is Cytoplasmic. Residues 360–377 (SNCCRSHIYPWCKCCQPC) are C-cys anchor. Residues Cys-362, Cys-363, Cys-374, and Cys-377 are each lipidated (S-palmitoyl cysteine). The residue at position 390 (Ser-390) is a Phosphoserine. A cytoplasmic ballast region spans residues 395–595 (KPTLKYVSFV…GQYSGFKSPY (201 aa)). Zn(2+)-binding residues include Cys-479, Cys-499, and Cys-506. GTP is bound by residues Arg-546, His-547, Tyr-550, and Ala-567. Cys-572 contacts Zn(2+). GTP-binding residues include Lys-583, Ser-589, and Gly-590.

It belongs to the P2X receptor family. In terms of assembly, homotrimers. Interacts with LAMA3, ITGB2, ACTB, ACTN4, SVIL, MPP3, HSPA1, HSPCB, HSPA8, PIK230 and PTPRB. Interacts (via C-terminus) with EMP2. Interacts with isoform B; this interaction potentiates P2RX7 responses. Post-translationally, phosphorylation results in its inactivation. ADP-ribosylation at Arg-125 is necessary and sufficient to activate P2RX7 and gate the channel. In terms of processing, palmitoylation of several cysteines in the C-terminal cytoplasmic tail is required for efficient localization to cell surface. Palmitoylation prevents channel desensitization by physically anchoring the palmitoylated groups to the membrane. In terms of tissue distribution, widely expressed with highest levels in brain and immune tissues. Predominant form in many tissues.

Its subcellular location is the cell membrane. The catalysed reaction is Ca(2+)(in) = Ca(2+)(out). It carries out the reaction K(+)(in) = K(+)(out). It catalyses the reaction Na(+)(in) = Na(+)(out). Activated by high extracellular ATP levels (0.1-2.5 mM). The synthetic analog 2'(3')-O-(4-benzoylbenzoyl)ATP (BzATP) acts as a potent agonist. Does not undergo desensitization, instead, undergoes a facilitation process where currents progressively increase with repetitive or prolonged agonist application. Palmitoylation prevents channel desensitization. The permeability of the P2RX7 channel is modulated by the amount of cholesterol in the plasma membrane. ATP-gated nonselective transmembrane cation channel that requires high millimolar concentrations of ATP for activation. Upon ATP binding, it rapidly opens to allow the influx of small cations Na(+) and Ca(2+), and the K(+) efflux. Also has the ability to form a large pore in the cell membrane, allowing the passage of large cationic molecules. In microglia, may mediate NADPH transport across the plasma membrane. In immune cells, P2RX7 acts as a molecular sensor in pathological inflammatory states by detecting and responding to high local concentrations of extracellar ATP. In microglial cells, P2RX7 activation leads to the release of pro-inflammatory cytokines, such as IL-1beta and IL-18, through the activation of the NLRP3 inflammasome and caspase-1. Cooperates with KCNK6 to activate NLRP3 inflammasome. Activates death pathways leading to apoptosis and autophagy. Activates death pathways leading to pyroptosis. Its function is as follows. Shows ion channel activity but no macropore function. In terms of biological role, non-functional channel. This Homo sapiens (Human) protein is P2X purinoceptor 7 (P2RX7).